The primary structure comprises 89 residues: Small ribosomal subunit protein uS15 (89 aa).

This sequence belongs to the universal ribosomal protein uS15 family. Part of the 30S ribosomal subunit. Forms a bridge to the 50S subunit in the 70S ribosome, contacting the 23S rRNA.

One of the primary rRNA binding proteins, it binds directly to 16S rRNA where it helps nucleate assembly of the platform of the 30S subunit by binding and bridging several RNA helices of the 16S rRNA. In terms of biological role, forms an intersubunit bridge (bridge B4) with the 23S rRNA of the 50S subunit in the ribosome. The polypeptide is Small ribosomal subunit protein uS15 (Roseiflexus sp. (strain RS-1)).